The chain runs to 308 residues: Cytochrome b (308 aa).

The next 4 membrane-spanning stretches (helical) occupy residues 1–21 (FGSLLGICLLTQIITGLLLAT), 45–66 (WLIRNLHANGASFFFICIYIHI), 81–101 (WNVGVILLLTLMATAFVGYVL), and 146–166 (FFALHFLLPFAITGLTLVHLT). Heme b is bound by residues histidine 51 and histidine 65. Positions 150 and 164 each coordinate heme b. Residue histidine 169 coordinates a ubiquinone. 3 consecutive transmembrane segments (helical) span residues 194–214 (MKDILGFALMIIPLAALALFS), 256–276 (LGGVLALAASILVLFLIPLLH), and 288–308 (LSQILFWTLVANLLILTWVGS).

The protein belongs to the cytochrome b family. As to quaternary structure, the cytochrome bc1 complex contains 11 subunits: 3 respiratory subunits (MT-CYB, CYC1 and UQCRFS1), 2 core proteins (UQCRC1 and UQCRC2) and 6 low-molecular weight proteins (UQCRH/QCR6, UQCRB/QCR7, UQCRQ/QCR8, UQCR10/QCR9, UQCR11/QCR10 and a cleavage product of UQCRFS1). This cytochrome bc1 complex then forms a dimer. Heme b is required as a cofactor.

The protein resides in the mitochondrion inner membrane. Its function is as follows. Component of the ubiquinol-cytochrome c reductase complex (complex III or cytochrome b-c1 complex) that is part of the mitochondrial respiratory chain. The b-c1 complex mediates electron transfer from ubiquinol to cytochrome c. Contributes to the generation of a proton gradient across the mitochondrial membrane that is then used for ATP synthesis. The protein is Cytochrome b (MT-CYB) of Ptiloprora plumbea (Leaden honeyeater).